A 523-amino-acid polypeptide reads, in one-letter code: 2-isopropylmalate synthase (523 aa).

Residues 5–267 (VIIFDTTLRD…HTNINHHEIW (263 aa)) enclose the Pyruvate carboxyltransferase domain. D14, H202, H204, and N238 together coordinate Mn(2+). The interval 392–523 (RLDYFSVQSG…HNKENNKEIV (132 aa)) is regulatory domain.

Belongs to the alpha-IPM synthase/homocitrate synthase family. LeuA type 1 subfamily. As to quaternary structure, homodimer. Requires Mn(2+) as cofactor.

It localises to the cytoplasm. It catalyses the reaction 3-methyl-2-oxobutanoate + acetyl-CoA + H2O = (2S)-2-isopropylmalate + CoA + H(+). It participates in amino-acid biosynthesis; L-leucine biosynthesis; L-leucine from 3-methyl-2-oxobutanoate: step 1/4. Its function is as follows. Catalyzes the condensation of the acetyl group of acetyl-CoA with 3-methyl-2-oxobutanoate (2-ketoisovalerate) to form 3-carboxy-3-hydroxy-4-methylpentanoate (2-isopropylmalate). The protein is 2-isopropylmalate synthase of Salmonella arizonae (strain ATCC BAA-731 / CDC346-86 / RSK2980).